Reading from the N-terminus, the 562-residue chain is MVKIVTVKTQAYQDQKPGTSGLRKRVKVFQSSANYAENFIQSIISTVEPAQRQEATLVVGGDGRFYMKEAIQLIARIAAANGIGRLVIGQNGILSTPAVSCIIRKIKAIGGIILTASHNPGGPNGDFGIKFNISNGGPAPEAITDKIFQISKTIEEYAVCPDLKVDLGVLGKQQFDLENKFKPFTVEIVDSVEAYATMLRSIFDFSALKELLSGPNRLKIRIDAMHGVVGPYVKKILCEELGAPANSAVNCVPLEDFGGHHPDPNLTYAADLVETMKSGEHDFGAAFDGDGDRNMILGKHGFFVNPSDSVAVIAANIFSIPYFQQTGVRGFARSMPTSGALDRVASATKIALYETPTGWKFFGNLMDASKLSLCGEESFGTGSDHIREKDGLWAVLAWLSILATRKQSVEDILKDHWQKYGRNFFTRYDYEEVEAEGANKMMKDLEALMFDRSFVGKQFSANDKVYTVEKADNFEYSDPVDGSISRNQGLRLIFTDGSRIVFRLSGTGSAGATIRLYIDSYEKDVAKINQDPQVMLAPLISIALKVSQLQERTGRTAPTVIT.

N-acetylmethionine is present on M1. K16 carries the post-translational modification N6-acetyllysine. Position 23 (R23) interacts with alpha-D-glucose 1,6-bisphosphate. Phosphothreonine is present on T115. S117 lines the alpha-D-glucose 1,6-bisphosphate pocket. S117 acts as the Phosphoserine intermediate in catalysis. S117 is a Mg(2+) binding site. S117 and S134 each carry phosphoserine. At T185 the chain carries Phosphothreonine. A phosphoserine mark is found at S201, S206, and S213. Residues D288, D290, and D292 each contribute to the Mg(2+) site. Alpha-D-glucose 1,6-bisphosphate-binding residues include D292 and R293. K349 bears the N6-acetyllysine mark. Position 353 is a phosphotyrosine (Y353). Position 357 (T357) interacts with alpha-D-glucose 1,6-bisphosphate. Phosphoserine is present on S369. E376, S378, and K389 together coordinate alpha-D-glucose 1,6-bisphosphate. S378 carries the phosphoserine modification. K419 is modified (N6-succinyllysine). T467 is modified (phosphothreonine; by PAK1). A phosphoserine mark is found at S477, S485, and S505. Residue T507 is modified to Phosphothreonine. Phosphoserine occurs at positions 509 and 541.

Belongs to the phosphohexose mutase family. Monomer. Requires Mg(2+) as cofactor. Post-translationally, phosphorylation at Thr-467 by PAK1 significantly enhances enzymatic activity.

The protein localises to the cytoplasm. It carries out the reaction alpha-D-glucose 1-phosphate = alpha-D-glucose 6-phosphate. The enzyme catalyses O-phospho-L-seryl-[protein] + alpha-D-glucose 1-phosphate = alpha-D-glucose 1,6-bisphosphate + L-seryl-[protein]. It catalyses the reaction alpha-D-glucose 1,6-bisphosphate + L-seryl-[protein] = O-phospho-L-seryl-[protein] + alpha-D-glucose 6-phosphate. With respect to regulation, glucose-1,6-bisphosphate enhances phosphorylation of the active site Ser-117, and thereby increases enzyme activity. Catalyzes the reversible isomerization of alpha-D-glucose 1-phosphate to alpha-D-glucose 6-phosphate. The mechanism proceeds via the intermediate compound alpha-D-glucose 1,6-bisphosphate. This enzyme participates in both the breakdown and synthesis of glucose. This is Phosphoglucomutase-1 (PGM1) from Homo sapiens (Human).